The following is a 347-amino-acid chain: tRNA N6-adenosine threonylcarbamoyltransferase (347 aa).

Positions 113 and 117 each coordinate Fe cation. Substrate-binding positions include Leu-136–Gly-140, Asp-170, Gly-183, Asp-187, and Asn-282. Fe cation is bound at residue Asp-310.

This sequence belongs to the KAE1 / TsaD family. Fe(2+) is required as a cofactor.

It localises to the cytoplasm. It carries out the reaction L-threonylcarbamoyladenylate + adenosine(37) in tRNA = N(6)-L-threonylcarbamoyladenosine(37) in tRNA + AMP + H(+). Functionally, required for the formation of a threonylcarbamoyl group on adenosine at position 37 (t(6)A37) in tRNAs that read codons beginning with adenine. Is involved in the transfer of the threonylcarbamoyl moiety of threonylcarbamoyl-AMP (TC-AMP) to the N6 group of A37, together with TsaE and TsaB. TsaD likely plays a direct catalytic role in this reaction. The protein is tRNA N6-adenosine threonylcarbamoyltransferase of Cutibacterium acnes (strain DSM 16379 / KPA171202) (Propionibacterium acnes).